Reading from the N-terminus, the 812-residue chain is Collagen-like protein 5 (812 aa).

Residues asparagine 13 and asparagine 83 are each glycosylated (N-linked (GlcNAc...) asparagine; by host). Collagen-like domains lie at 69–128, 143–502, and 506–565; these read GASG…KGDD, GEKG…KGDN, and GETG…KGEA. The tract at residues 71-568 is disordered; the sequence is SGAQGVKGDP…PGIKGEAGTN (498 aa). Composition is skewed to basic and acidic residues over residues 88–112, 121–435, 444–523, and 531–561; these read TKGE…EKGD, SKGD…ETGS, SKGD…KGIK, and VKGD…DPGI. N-linked (GlcNAc...) asparagine; by host glycosylation occurs at asparagine 502. N-linked (GlcNAc...) asparagine; by host glycans are attached at residues asparagine 637, asparagine 658, and asparagine 667. A disordered region spans residues 730-802; that stretch reads GQARTNGAST…VSASGGRGGD (73 aa). The segment covering 752–765 has biased composition (gly residues); sequence FGGGGGGASGFAKG.

In terms of processing, may be hydroxylated on lysine by the viral-encoded procollagen-lysine,2-oxoglutarate 5-dioxygenase.

The protein resides in the virion. May participate in the formation of a layer of cross-linked glycosylated fibrils at the viral surface thus giving it a hairy-like appearance. The protein is Collagen-like protein 5 of Acanthamoeba polyphaga (Amoeba).